Consider the following 418-residue polypeptide: Glutamyl-tRNA reductase (418 aa).

Residues 49 to 52 (TCNR), Ser107, 112 to 114 (EPQ), and Gln118 contribute to the substrate site. The active-site Nucleophile is Cys50. Residue 187–192 (GAGETI) participates in NADP(+) binding.

It belongs to the glutamyl-tRNA reductase family. As to quaternary structure, homodimer.

The enzyme catalyses (S)-4-amino-5-oxopentanoate + tRNA(Glu) + NADP(+) = L-glutamyl-tRNA(Glu) + NADPH + H(+). The protein operates within porphyrin-containing compound metabolism; protoporphyrin-IX biosynthesis; 5-aminolevulinate from L-glutamyl-tRNA(Glu): step 1/2. Catalyzes the NADPH-dependent reduction of glutamyl-tRNA(Glu) to glutamate 1-semialdehyde (GSA). The polypeptide is Glutamyl-tRNA reductase (Vibrio parahaemolyticus serotype O3:K6 (strain RIMD 2210633)).